A 153-amino-acid polypeptide reads, in one-letter code: ATP synthase subunit b' (153 aa).

A helical transmembrane segment spans residues 23–40 (LMAIQVVALTYILNSLFF).

It belongs to the ATPase B chain family. F-type ATPases have 2 components, F(1) - the catalytic core - and F(0) - the membrane proton channel. F(1) has five subunits: alpha(3), beta(3), gamma(1), delta(1), epsilon(1). F(0) has four main subunits: a(1), b(1), b'(1) and c(10-14). The alpha and beta chains form an alternating ring which encloses part of the gamma chain. F(1) is attached to F(0) by a central stalk formed by the gamma and epsilon chains, while a peripheral stalk is formed by the delta, b and b' chains.

It is found in the cellular thylakoid membrane. Its function is as follows. F(1)F(0) ATP synthase produces ATP from ADP in the presence of a proton or sodium gradient. F-type ATPases consist of two structural domains, F(1) containing the extramembraneous catalytic core and F(0) containing the membrane proton channel, linked together by a central stalk and a peripheral stalk. During catalysis, ATP synthesis in the catalytic domain of F(1) is coupled via a rotary mechanism of the central stalk subunits to proton translocation. Functionally, component of the F(0) channel, it forms part of the peripheral stalk, linking F(1) to F(0). The b'-subunit is a diverged and duplicated form of b found in plants and photosynthetic bacteria. The polypeptide is ATP synthase subunit b' (Prochlorococcus marinus (strain MIT 9215)).